Reading from the N-terminus, the 409-residue chain is Tryptophan synthase beta chain 1 (409 aa).

The residue at position 104 (K104) is an N6-(pyridoxal phosphate)lysine.

Belongs to the TrpB family. In terms of assembly, tetramer of two alpha and two beta chains. Pyridoxal 5'-phosphate is required as a cofactor.

It carries out the reaction (1S,2R)-1-C-(indol-3-yl)glycerol 3-phosphate + L-serine = D-glyceraldehyde 3-phosphate + L-tryptophan + H2O. Its pathway is amino-acid biosynthesis; L-tryptophan biosynthesis; L-tryptophan from chorismate: step 5/5. Functionally, the beta subunit is responsible for the synthesis of L-tryptophan from indole and L-serine. The protein is Tryptophan synthase beta chain 1 (trpB1) of Nostoc sp. (strain PCC 7120 / SAG 25.82 / UTEX 2576).